The sequence spans 117 residues: Large ribosomal subunit protein bL19 (117 aa).

It belongs to the bacterial ribosomal protein bL19 family.

In terms of biological role, this protein is located at the 30S-50S ribosomal subunit interface and may play a role in the structure and function of the aminoacyl-tRNA binding site. The sequence is that of Large ribosomal subunit protein bL19 from Thermotoga neapolitana (strain ATCC 49049 / DSM 4359 / NBRC 107923 / NS-E).